Here is a 264-residue protein sequence, read N- to C-terminus: Teichoic acids export ATP-binding protein TagH (264 aa).

The region spanning Ile-24–Lys-243 is the ABC transporter domain. Gly-57–Ser-64 serves as a coordination point for ATP.

This sequence belongs to the ABC transporter superfamily. Teichoic acids exporter (TC 3.A.1.104.1) family. As to quaternary structure, the complex is composed of two ATP-binding proteins (TagH) and two transmembrane proteins (TagG).

The protein localises to the cell membrane. The catalysed reaction is ATP + H2O + teichoic acidSide 1 = ADP + phosphate + teichoic acidSide 2.. Functionally, part of the ABC transporter complex TagGH involved in teichoic acids export. Responsible for energy coupling to the transport system. This is Teichoic acids export ATP-binding protein TagH from Staphylococcus epidermidis (strain ATCC 35984 / DSM 28319 / BCRC 17069 / CCUG 31568 / BM 3577 / RP62A).